We begin with the raw amino-acid sequence, 574 residues long: Aspartate--tRNA ligase (574 aa).

Glutamate 172 is an L-aspartate binding site. Residues 196-199 (QIFK) are aspartate. Position 218 (arginine 218) interacts with L-aspartate. ATP contacts are provided by residues 218 to 220 (RDE) and glutamine 227. Histidine 453 provides a ligand contact to L-aspartate. Glutamate 487 contributes to the ATP binding site. Arginine 494 contributes to the L-aspartate binding site. Residue 539 to 542 (GLDR) coordinates ATP.

This sequence belongs to the class-II aminoacyl-tRNA synthetase family. Type 1 subfamily. In terms of assembly, homodimer.

It is found in the cytoplasm. It catalyses the reaction tRNA(Asp) + L-aspartate + ATP = L-aspartyl-tRNA(Asp) + AMP + diphosphate. Catalyzes the attachment of L-aspartate to tRNA(Asp) in a two-step reaction: L-aspartate is first activated by ATP to form Asp-AMP and then transferred to the acceptor end of tRNA(Asp). In Blochmanniella pennsylvanica (strain BPEN), this protein is Aspartate--tRNA ligase.